Consider the following 934-residue polypeptide: Bifunctional uridylyltransferase/uridylyl-removing enzyme (934 aa).

A uridylyltransferase region spans residues 1 to 379 (MSAHDLKLEE…TFSRRKRKLS (379 aa)). The segment at 380–736 (DDGAFISENH…AKPHAFEAVT (357 aa)) is uridylyl-removing. Residues 496–613 (VDEHLLRCIA…IDFADTVQTM (118 aa)) form the HD domain. 2 ACT domains span residues 737–818 (EITV…DMLA) and 848–931 (VIEV…RSPQ).

The protein belongs to the GlnD family. The cofactor is Mg(2+).

It carries out the reaction [protein-PII]-L-tyrosine + UTP = [protein-PII]-uridylyl-L-tyrosine + diphosphate. The enzyme catalyses [protein-PII]-uridylyl-L-tyrosine + H2O = [protein-PII]-L-tyrosine + UMP + H(+). Its activity is regulated as follows. Uridylyltransferase (UTase) activity is inhibited by glutamine, while glutamine activates uridylyl-removing (UR) activity. In terms of biological role, modifies, by uridylylation and deuridylylation, the PII regulatory proteins (GlnB and homologs), in response to the nitrogen status of the cell that GlnD senses through the glutamine level. Under low glutamine levels, catalyzes the conversion of the PII proteins and UTP to PII-UMP and PPi, while under higher glutamine levels, GlnD hydrolyzes PII-UMP to PII and UMP (deuridylylation). Thus, controls uridylylation state and activity of the PII proteins, and plays an important role in the regulation of nitrogen assimilation and metabolism. This chain is Bifunctional uridylyltransferase/uridylyl-removing enzyme, found in Brucella ovis (strain ATCC 25840 / 63/290 / NCTC 10512).